We begin with the raw amino-acid sequence, 134 residues long: Small ribosomal subunit protein uS12 (134 aa).

The segment at 1 to 26 (MPTTQQLLRKGRTTLQKKSKVPALKG) is disordered. The span at 9–20 (RKGRTTLQKKSK) shows a compositional bias: basic residues. A 3-methylthioaspartic acid modification is found at D89. The disordered stretch occupies residues 103 to 134 (DTQGVKDRNKSRSKYGTKKPKAGAAAAGAKKK). Basic residues predominate over residues 113–123 (SRSKYGTKKPK). Residues 124-134 (AGAAAAGAKKK) are compositionally biased toward low complexity.

Belongs to the universal ribosomal protein uS12 family. Part of the 30S ribosomal subunit. Contacts proteins S8 and S17. May interact with IF1 in the 30S initiation complex.

In terms of biological role, with S4 and S5 plays an important role in translational accuracy. Its function is as follows. Interacts with and stabilizes bases of the 16S rRNA that are involved in tRNA selection in the A site and with the mRNA backbone. Located at the interface of the 30S and 50S subunits, it traverses the body of the 30S subunit contacting proteins on the other side and probably holding the rRNA structure together. The combined cluster of proteins S8, S12 and S17 appears to hold together the shoulder and platform of the 30S subunit. This is Small ribosomal subunit protein uS12 from Deinococcus geothermalis (strain DSM 11300 / CIP 105573 / AG-3a).